The sequence spans 362 residues: MKTTPFTDVHIALGAKMHEFAGYNMPIEYGGIIDEHMNVVNNVGVFDVSHMGEFWVKGPNALRFLQKVSSNDASKLAVGQVQYCCFPNNDGGIVDDFLLYRYEEEKYMMVPNAANIAKDWAWCRQQNTMGAILENASDNIAQLAVQGPKATEVMQRLTDIDLNEITYYTFKVGSFAGCPDVIISATGYTGAGGFELYFYPQYAQKIWDALFEAGKPEGIKPAGLGARDTLRLEMGFCLYGNDICDTTSPIEAGLGWITKFTDDKMDMPSRKIMEEQKAGGLKRKLVAFELKDKGIPRQHYEIANAEGQIIGEVTSGTMSPCLKKGIGMGYVATEFSKVGTELGIMVRGRQLKAEIVKPPFRK.

Belongs to the GcvT family. In terms of assembly, the glycine cleavage system is composed of four proteins: P, T, L and H.

It carries out the reaction N(6)-[(R)-S(8)-aminomethyldihydrolipoyl]-L-lysyl-[protein] + (6S)-5,6,7,8-tetrahydrofolate = N(6)-[(R)-dihydrolipoyl]-L-lysyl-[protein] + (6R)-5,10-methylene-5,6,7,8-tetrahydrofolate + NH4(+). In terms of biological role, the glycine cleavage system catalyzes the degradation of glycine. In Porphyromonas gingivalis (strain ATCC 33277 / DSM 20709 / CIP 103683 / JCM 12257 / NCTC 11834 / 2561), this protein is Aminomethyltransferase.